Consider the following 204-residue polypeptide: Proteasome subunit beta type-3 (204 aa).

It belongs to the peptidase T1B family. As to quaternary structure, the 26S proteasome consists of a 20S proteasome core and two 19S regulatory subunits. The 20S proteasome core is composed of 28 subunits that are arranged in four stacked rings, resulting in a barrel-shaped structure. The two end rings are each formed by seven alpha subunits, and the two central rings are each formed by seven beta subunits. The catalytic chamber with the active sites is on the inside of the barrel.

The protein resides in the cytoplasm. The protein localises to the nucleus. Its function is as follows. Non-catalytic component of the proteasome, a multicatalytic proteinase complex which is characterized by its ability to cleave peptides with Arg, Phe, Tyr, Leu, and Glu adjacent to the leaving group at neutral or slightly basic pH. The proteasome has an ATP-dependent proteolytic activity. The polypeptide is Proteasome subunit beta type-3 (PBC1) (Picea mariana (Black spruce)).